The primary structure comprises 164 residues: CDP-archaeol synthase (164 aa).

Transmembrane regions (helical) follow at residues 3–23 (LLYF…AVLA), 51–71 (YEGF…PNLL), 77–97 (LLDA…GAFI), and 122–142 (LAVY…AVII).

The protein belongs to the CDP-archaeol synthase family. It depends on Mg(2+) as a cofactor.

Its subcellular location is the cell membrane. It catalyses the reaction 2,3-bis-O-(geranylgeranyl)-sn-glycerol 1-phosphate + CTP + H(+) = CDP-2,3-bis-O-(geranylgeranyl)-sn-glycerol + diphosphate. It functions in the pathway membrane lipid metabolism; glycerophospholipid metabolism. Functionally, catalyzes the formation of CDP-2,3-bis-(O-geranylgeranyl)-sn-glycerol (CDP-archaeol) from 2,3-bis-(O-geranylgeranyl)-sn-glycerol 1-phosphate (DGGGP) and CTP. This reaction is the third ether-bond-formation step in the biosynthesis of archaeal membrane lipids. The sequence is that of CDP-archaeol synthase from Pyrobaculum islandicum (strain DSM 4184 / JCM 9189 / GEO3).